The following is a 454-amino-acid chain: tRNA modification GTPase MnmE (454 aa).

(6S)-5-formyl-5,6,7,8-tetrahydrofolate-binding residues include Arg-23, Glu-80, and Lys-120. Positions 216 to 377 (GMKVVIAGRP…LRNHLKQSMG (162 aa)) constitute a TrmE-type G domain. Asn-226 is a binding site for K(+). Residues 226–231 (NAGKSS), 245–251 (TDIAGTT), 270–273 (DTAG), 335–338 (NKAD), and 358–360 (SAR) each bind GTP. Position 230 (Ser-230) interacts with Mg(2+). The K(+) site is built by Thr-245, Ile-247, and Thr-250. Residue Thr-251 participates in Mg(2+) binding. Lys-454 contributes to the (6S)-5-formyl-5,6,7,8-tetrahydrofolate binding site.

It belongs to the TRAFAC class TrmE-Era-EngA-EngB-Septin-like GTPase superfamily. TrmE GTPase family. In terms of assembly, homodimer. Heterotetramer of two MnmE and two MnmG subunits. It depends on K(+) as a cofactor.

It is found in the cytoplasm. Exhibits a very high intrinsic GTPase hydrolysis rate. Involved in the addition of a carboxymethylaminomethyl (cmnm) group at the wobble position (U34) of certain tRNAs, forming tRNA-cmnm(5)s(2)U34. The chain is tRNA modification GTPase MnmE from Salmonella arizonae (strain ATCC BAA-731 / CDC346-86 / RSK2980).